The primary structure comprises 198 residues: Nucleoid occlusion factor SlmA (198 aa).

Residues 10 to 70 (NRREEILQSL…SLIEFIEDSL (61 aa)) form the HTH tetR-type domain. A DNA-binding region (H-T-H motif) is located at residues 33–52 (TTAKLAASVGVSEAALYRHF). Residues 117 to 144 (EQDRLQGRINQLFERIEAQLRQVLREKR) are a coiled coil.

This sequence belongs to the nucleoid occlusion factor SlmA family. As to quaternary structure, homodimer. Interacts with FtsZ.

Its subcellular location is the cytoplasm. It localises to the nucleoid. Required for nucleoid occlusion (NO) phenomenon, which prevents Z-ring formation and cell division over the nucleoid. Acts as a DNA-associated cell division inhibitor that binds simultaneously chromosomal DNA and FtsZ, and disrupts the assembly of FtsZ polymers. SlmA-DNA-binding sequences (SBS) are dispersed on non-Ter regions of the chromosome, preventing FtsZ polymerization at these regions. The protein is Nucleoid occlusion factor SlmA of Escherichia coli O45:K1 (strain S88 / ExPEC).